The chain runs to 393 residues: MTRIGTPLSPTATRVLLCGCGELGKEVVIELQRLGVEVIAVDRYANAPAMQVAHRSHVINMLDGAALRAVIEAEKPHFIVPEIEAIATATLVALEAEGFTVIPTARAAQLTMNREGIRRLAAEELDLPTSPYHFADTFEDYSKAVQDLGFPCVVKPVMSSSGKGQSLLRSADDVQKAWDYAQEGGRAGKGRVIIEGFIDFDYEITLLTVRHVGGTTFCAPVGHRQEKGDYQESWQPQAMSPVALAESERVAKAVTEALGGRGLFGVELFIKGDQVWFSEVSPRPHDTGLVTLISQDLSQFALHARAILGLPVPLIRQFGPSASAVILVEGQSTQTAFANLGAALSEPDTALRLFGKPEVNGQRRMGVALARDESIEAARAKATRASQAVVVEL.

N(1)-(5-phospho-beta-D-ribosyl)glycinamide is bound by residues 22–23 (EL) and Glu82. ATP-binding positions include Arg114, Lys155, 160 to 165 (SSGKGQ), 195 to 198 (EGFI), and Glu203. The region spanning 119-308 (RLAAEELDLP…QFALHARAIL (190 aa)) is the ATP-grasp domain. Mg(2+) contacts are provided by Glu267 and Glu279. Residues Asp286, Lys356, and 363–364 (RR) each bind N(1)-(5-phospho-beta-D-ribosyl)glycinamide.

Belongs to the PurK/PurT family. As to quaternary structure, homodimer.

The catalysed reaction is N(1)-(5-phospho-beta-D-ribosyl)glycinamide + formate + ATP = N(2)-formyl-N(1)-(5-phospho-beta-D-ribosyl)glycinamide + ADP + phosphate + H(+). Its pathway is purine metabolism; IMP biosynthesis via de novo pathway; N(2)-formyl-N(1)-(5-phospho-D-ribosyl)glycinamide from N(1)-(5-phospho-D-ribosyl)glycinamide (formate route): step 1/1. Its function is as follows. Involved in the de novo purine biosynthesis. Catalyzes the transfer of formate to 5-phospho-ribosyl-glycinamide (GAR), producing 5-phospho-ribosyl-N-formylglycinamide (FGAR). Formate is provided by PurU via hydrolysis of 10-formyl-tetrahydrofolate. This is Formate-dependent phosphoribosylglycinamide formyltransferase from Pseudomonas fluorescens (strain Pf0-1).